Here is a 306-residue protein sequence, read N- to C-terminus: GTP cyclohydrolase FolE2 (306 aa).

This sequence belongs to the GTP cyclohydrolase IV family.

It catalyses the reaction GTP + H2O = 7,8-dihydroneopterin 3'-triphosphate + formate + H(+). It participates in cofactor biosynthesis; 7,8-dihydroneopterin triphosphate biosynthesis; 7,8-dihydroneopterin triphosphate from GTP: step 1/1. Converts GTP to 7,8-dihydroneopterin triphosphate. This Xanthomonas oryzae pv. oryzae (strain MAFF 311018) protein is GTP cyclohydrolase FolE2.